A 334-amino-acid polypeptide reads, in one-letter code: MSGFYHKHFLKLLDFTPAELNSLLQLAAKLKADKKSGKEEAKLTGKNIALIFEKDSTRTRCSFEVAAYDQGARVTYLGPSGSQIGHKESIKDTARVLGRMYDGIQYRGYGQEIVETLAEYAGVPVWNGLTNEFHPTQLLADLLTMQEHLPGKTFNEMTLVYAGDARNNMGNSMLEAAALTGLDLRLVAPQACWPEAALVTECRALAQQNGGNITLTEDVAKGVEGADFIYTDVWVSMGEAKEKWAERIALLRDYQVNSKMMQLTGNPEVKFLHCLPAFHDDQTTLGKKMAEEFGLHGGMEVTDEVFESAASIVFDQAENRMHTIKAVMVATLSK.

Residues 56–59 (STRT), Gln83, Arg107, and 134–137 (HPTQ) each bind carbamoyl phosphate. L-ornithine-binding positions include Asn168, Asp232, and 236 to 237 (SM). Carbamoyl phosphate contacts are provided by residues 274-275 (CL) and Arg320.

The protein belongs to the aspartate/ornithine carbamoyltransferase superfamily. OTCase family.

The protein resides in the cytoplasm. The catalysed reaction is carbamoyl phosphate + L-ornithine = L-citrulline + phosphate + H(+). The protein operates within amino-acid biosynthesis; L-arginine biosynthesis; L-arginine from L-ornithine and carbamoyl phosphate: step 1/3. Reversibly catalyzes the transfer of the carbamoyl group from carbamoyl phosphate (CP) to the N(epsilon) atom of ornithine (ORN) to produce L-citrulline. This Shigella sonnei (strain Ss046) protein is Ornithine carbamoyltransferase.